A 237-amino-acid polypeptide reads, in one-letter code: Purine nucleoside phosphorylase DeoD-type (237 aa).

Position 4 (His4) interacts with a purine D-ribonucleoside. Phosphate-binding positions include Gly20, Arg24, Arg43, and 87–90 (RVGS). A purine D-ribonucleoside-binding positions include 179–181 (EME) and 203–204 (SD). Asp204 (proton donor) is an active-site residue.

Belongs to the PNP/UDP phosphorylase family. As to quaternary structure, homohexamer; trimer of homodimers.

It carries out the reaction a purine D-ribonucleoside + phosphate = a purine nucleobase + alpha-D-ribose 1-phosphate. The catalysed reaction is a purine 2'-deoxy-D-ribonucleoside + phosphate = a purine nucleobase + 2-deoxy-alpha-D-ribose 1-phosphate. Its function is as follows. Catalyzes the reversible phosphorolytic breakdown of the N-glycosidic bond in the beta-(deoxy)ribonucleoside molecules, with the formation of the corresponding free purine bases and pentose-1-phosphate. The chain is Purine nucleoside phosphorylase DeoD-type from Dichelobacter nodosus (strain VCS1703A).